Here is a 264-residue protein sequence, read N- to C-terminus: ATP synthase subunit a (264 aa).

The next 6 membrane-spanning stretches (helical) occupy residues 29 to 49 (TWHI…LWLF), 89 to 109 (VIAP…FMDM), 134 to 154 (DLNI…YYSI), 177 to 197 (IPVN…SLAL), 208 to 228 (LIFI…ALGV), and 235 to 255 (LIFH…LTIV).

Belongs to the ATPase A chain family. As to quaternary structure, F-type ATPases have 2 components, CF(1) - the catalytic core - and CF(0) - the membrane proton channel. CF(1) has five subunits: alpha(3), beta(3), gamma(1), delta(1), epsilon(1). CF(0) has three main subunits: a(1), b(2) and c(9-12). The alpha and beta chains form an alternating ring which encloses part of the gamma chain. CF(1) is attached to CF(0) by a central stalk formed by the gamma and epsilon chains, while a peripheral stalk is formed by the delta and b chains.

Its subcellular location is the cell inner membrane. Key component of the proton channel; it plays a direct role in the translocation of protons across the membrane. The polypeptide is ATP synthase subunit a (Shewanella sediminis (strain HAW-EB3)).